A 277-amino-acid chain; its full sequence is S-formylglutathione hydrolase FrmB (277 aa).

Catalysis depends on charge relay system residues S145, D221, and H254.

This sequence belongs to the esterase D family.

The enzyme catalyses S-formylglutathione + H2O = formate + glutathione + H(+). Its function is as follows. Serine hydrolase involved in the detoxification of formaldehyde. Hydrolyzes S-formylglutathione to glutathione and formate. This is S-formylglutathione hydrolase FrmB (frmB) from Escherichia coli (strain K12 / DH10B).